Consider the following 359-residue polypeptide: Ribosomal RNA small subunit methyltransferase H (359 aa).

S-adenosyl-L-methionine is bound by residues 39-41, Asp-58, Phe-87, Asp-108, and Gln-115; that span reads AGH. Residues 339-359 form a disordered region; it reads IQGSASPGRAKNTARIRTRRG. Over residues 350 to 359 the composition is skewed to basic residues; that stretch reads NTARIRTRRG.

Belongs to the methyltransferase superfamily. RsmH family.

It localises to the cytoplasm. It catalyses the reaction cytidine(1402) in 16S rRNA + S-adenosyl-L-methionine = N(4)-methylcytidine(1402) in 16S rRNA + S-adenosyl-L-homocysteine + H(+). Specifically methylates the N4 position of cytidine in position 1402 (C1402) of 16S rRNA. The protein is Ribosomal RNA small subunit methyltransferase H of Bifidobacterium longum (strain DJO10A).